Consider the following 89-residue polypeptide: Extender of the chronological lifespan protein ecl3 (89 aa).

This sequence belongs to the ecl1 family.

It is found in the nucleus. Its function is as follows. Involved in chronological cell aging. The polypeptide is Extender of the chronological lifespan protein ecl3 (ecl3) (Schizosaccharomyces pombe (strain 972 / ATCC 24843) (Fission yeast)).